A 196-amino-acid polypeptide reads, in one-letter code: Probable malonic semialdehyde reductase RutE (196 aa).

The protein belongs to the nitroreductase family. HadB/RutE subfamily. Requires FMN as cofactor.

The catalysed reaction is 3-hydroxypropanoate + NADP(+) = 3-oxopropanoate + NADPH + H(+). May reduce toxic product malonic semialdehyde to 3-hydroxypropionic acid, which is excreted. The chain is Probable malonic semialdehyde reductase RutE from Klebsiella pneumoniae (strain 342).